The primary structure comprises 207 residues: MKKNIISIIIVCLSFLTSIILYQYLPEEIPIQWSGNKPAAIVSKPLTIFIIPVVMLIYYLTFYMLTIKSTQKNKALLFLASNNMLILLYILQLSTLLISLGYEVNIDLIIGLGVGIFLIIGGNSMQLAEQNHLIGLRTPWTLKDETVWKLGNRFASKVLVVCGFIIAVLSFFTGEYIILIMIVLVLLALVISTLASYHYYKKLNGSR.

6 helical membrane-spanning segments follow: residues 5-25 (IISI…YQYL), 47-67 (TIFI…MLTI), 78-98 (FLAS…TLLI), 100-120 (LGYE…FLII), 150-170 (LGNR…AVLS), and 171-191 (FFTG…ALVI).

The protein resides in the membrane. Immunity protein that provides protection for the cell against the toxic effects of SDP, its own SdpC-derived killing factor, and that functions as a receptor/signal transduction protein as well. Once SDP accumulates in the extracellular milieu, SdpI binds to SDP, causing sequestration of SdpR at the bacterial membrane. The sequence is that of Immunity protein SdpI (sdpI) from Bacillus subtilis (strain 168).